Consider the following 184-residue polypeptide: Glutathione-regulated potassium-efflux system ancillary protein KefG (184 aa).

Belongs to the NAD(P)H dehydrogenase (quinone) family. KefG subfamily. Interacts with KefB.

It localises to the cell inner membrane. The enzyme catalyses a quinone + NADH + H(+) = a quinol + NAD(+). It carries out the reaction a quinone + NADPH + H(+) = a quinol + NADP(+). Regulatory subunit of a potassium efflux system that confers protection against electrophiles. Required for full activity of KefB. The chain is Glutathione-regulated potassium-efflux system ancillary protein KefG from Erwinia tasmaniensis (strain DSM 17950 / CFBP 7177 / CIP 109463 / NCPPB 4357 / Et1/99).